The primary structure comprises 360 residues: MIFSGKFTSHLLNYGFKPNNLRLLSTSTHPTIYFTGIQPTGIPHLGNFFGSIEPWTELQNSVDKNILMMLSVVDQHAISLGPLPANELRQNTHQMTASLIACGVDPNRTLLFRQSDVPQIAQISWILGSLQTTSKLARLPQYKEKKERFKKGDIPVGLLTYPLLQAADVLTFKATTVPVGEDQSQHLNLLGGLAYAFNKTYETEIFPIPKQLTRESHARIRSLREPEKKMSKSSGGPRSRIEITDSRSTIIEKCQKAQSDNAGKVTYDKENRLAVSNLLDLYSAVTKTQTSEIDFSNWTTLDLKMNLAEAVDKRLAPIRQKFEELQNTGEVDKVLTENGEKAREIAEKNLEEIRRTIGFL.

Residues Gln38 and 44–47 (HLGN) contribute to the ATP site. Positions 39-47 (PTGIPHLGN) match the 'HIGH' region motif. Asp168 contacts L-tryptophan. Residues 180–182 (GED) and 229–233 (KMSKS) contribute to the ATP site. A compositionally biased stretch (basic and acidic residues) spans 220–230 (IRSLREPEKKM). The segment at 220–241 (IRSLREPEKKMSKSSGGPRSRI) is disordered. Residues 229 to 233 (KMSKS) carry the 'KMSKS' region motif.

Belongs to the class-I aminoacyl-tRNA synthetase family.

The protein resides in the mitochondrion matrix. It carries out the reaction tRNA(Trp) + L-tryptophan + ATP = L-tryptophyl-tRNA(Trp) + AMP + diphosphate + H(+). Catalyzes the attachment of tryptophan to tRNA(Trp). The sequence is that of Tryptophan--tRNA ligase, mitochondrial from Caenorhabditis elegans.